Consider the following 138-residue polypeptide: uncharacterized protein (138 aa).

Residue 35–42 (DFIGSFYN) coordinates ATP.

This is an uncharacterized protein from Acanthamoeba polyphaga mimivirus (APMV).